Reading from the N-terminus, the 310-residue chain is Homoserine kinase (310 aa).

85–95 contributes to the ATP binding site; sequence PKGLGLGSSGA.

This sequence belongs to the GHMP kinase family. Homoserine kinase subfamily.

It is found in the cytoplasm. It carries out the reaction L-homoserine + ATP = O-phospho-L-homoserine + ADP + H(+). It functions in the pathway amino-acid biosynthesis; L-threonine biosynthesis; L-threonine from L-aspartate: step 4/5. Catalyzes the ATP-dependent phosphorylation of L-homoserine to L-homoserine phosphate. This chain is Homoserine kinase, found in Thermoplasma acidophilum (strain ATCC 25905 / DSM 1728 / JCM 9062 / NBRC 15155 / AMRC-C165).